The following is a 190-amino-acid chain: MIDPDGYRPNVGIVLMCRDGQVFWGRRVRLDGWQFPQGGMHSDETPVEAMYRELNEETGLLPEHVQLLGATPGWLRYRLPSQAVRCNRSQMCIGQKQVWFLLQLIGDESHVQLDQSENPEFDHWRWVSFWYPIEHVVMFKRGVYARALCQLASLAQQVVGLEVGTMPQYVQDICLLNVGYKHLPNWVSRY.

The 144-residue stretch at 6–149 (GYRPNVGIVL…KRGVYARALC (144 aa)) folds into the Nudix hydrolase domain. A Nudix box motif is present at residues 38-59 (GGMHSDETPVEAMYRELNEETG).

This sequence belongs to the Nudix hydrolase family. RppH subfamily. It depends on a divalent metal cation as a cofactor.

Accelerates the degradation of transcripts by removing pyrophosphate from the 5'-end of triphosphorylated RNA, leading to a more labile monophosphorylated state that can stimulate subsequent ribonuclease cleavage. The chain is RNA pyrophosphohydrolase from Xylella fastidiosa (strain 9a5c).